The primary structure comprises 148 residues: Deoxyuridine 5'-triphosphate nucleotidohydrolase (148 aa).

Residues 68–70, N81, 85–87, and K95 each bind substrate; these read RSG and TVD.

It belongs to the dUTPase family. Mg(2+) is required as a cofactor.

It catalyses the reaction dUTP + H2O = dUMP + diphosphate + H(+). The protein operates within pyrimidine metabolism; dUMP biosynthesis; dUMP from dCTP (dUTP route): step 2/2. Functionally, this enzyme is involved in nucleotide metabolism: it produces dUMP, the immediate precursor of thymidine nucleotides and it decreases the intracellular concentration of dUTP so that uracil cannot be incorporated into DNA. The polypeptide is Deoxyuridine 5'-triphosphate nucleotidohydrolase (Caldanaerobacter subterraneus subsp. tengcongensis (strain DSM 15242 / JCM 11007 / NBRC 100824 / MB4) (Thermoanaerobacter tengcongensis)).